A 105-amino-acid polypeptide reads, in one-letter code: Putative membrane protein insertion efficiency factor (105 aa).

It belongs to the UPF0161 family.

Its subcellular location is the cell membrane. Its function is as follows. Could be involved in insertion of integral membrane proteins into the membrane. The sequence is that of Putative membrane protein insertion efficiency factor from Bifidobacterium longum subsp. infantis (strain ATCC 15697 / DSM 20088 / JCM 1222 / NCTC 11817 / S12).